The chain runs to 206 residues: Ras-related protein O-RAL (206 aa).

Gly-21–Ser-28 provides a ligand contact to GTP. The Effector region motif lies at Tyr-43–Tyr-51. GTP-binding positions include Asp-68–Gln-72 and Asn-128–Asp-131. Over residues Lys-180–Gly-189 the composition is skewed to basic and acidic residues. Positions Lys-180 to Leu-206 are disordered. A Cysteine methyl ester modification is found at Cys-203. A lipid anchor (S-geranylgeranyl cysteine) is attached at Cys-203. A propeptide spans Cys-204–Leu-206 (removed in mature form).

Belongs to the small GTPase superfamily. Ras family.

It localises to the cell membrane. The enzyme catalyses GTP + H2O = GDP + phosphate + H(+). The protein is Ras-related protein O-RAL of Diplobatis ommata (Ocellated electric ray).